We begin with the raw amino-acid sequence, 308 residues long: Ornithine carbamoyltransferase (308 aa).

Carbamoyl phosphate contacts are provided by residues 57 to 60, Q84, R108, and 135 to 138; these read STRT and HPCQ. Residues N166, D224, and 228-229 each bind L-ornithine; that span reads SM. Residues 264–265 and R292 each bind carbamoyl phosphate; that span reads CL.

The protein belongs to the aspartate/ornithine carbamoyltransferase superfamily. OTCase family.

The protein localises to the cytoplasm. The catalysed reaction is carbamoyl phosphate + L-ornithine = L-citrulline + phosphate + H(+). It functions in the pathway amino-acid degradation; L-arginine degradation via ADI pathway; carbamoyl phosphate from L-arginine: step 2/2. Reversibly catalyzes the transfer of the carbamoyl group from carbamoyl phosphate (CP) to the N(epsilon) atom of ornithine (ORN) to produce L-citrulline. This is Ornithine carbamoyltransferase from Ralstonia pickettii (strain 12J).